Consider the following 127-residue polypeptide: Glycine cleavage system H protein (127 aa).

The 82-residue stretch at 24 to 105 (TALVGITDFA…YEDGWMVKVS (82 aa)) folds into the Lipoyl-binding domain. Lys65 carries the post-translational modification N6-lipoyllysine.

This sequence belongs to the GcvH family. In terms of assembly, the glycine cleavage system is composed of four proteins: P, T, L and H. Requires (R)-lipoate as cofactor.

The glycine cleavage system catalyzes the degradation of glycine. The H protein shuttles the methylamine group of glycine from the P protein to the T protein. The sequence is that of Glycine cleavage system H protein from Prosthecochloris aestuarii (strain DSM 271 / SK 413).